The primary structure comprises 299 residues: GTPase Era (299 aa).

The region spanning Lys5 to Glu172 is the Era-type G domain. The interval Gly13–Ser20 is G1. Position 13–20 (Gly13–Ser20) interacts with GTP. Residues Gln39–Asn43 form a G2 region. Positions Asp60–Gly63 are G3. GTP contacts are provided by residues Asp60–Ile64 and Asn122–Asp125. A G4 region spans residues Asn122 to Asp125. Residues Ile151–Ala153 are G5. The KH type-2 domain maps to Thr203–Arg280.

Belongs to the TRAFAC class TrmE-Era-EngA-EngB-Septin-like GTPase superfamily. Era GTPase family. In terms of assembly, monomer.

The protein resides in the cytoplasm. Its subcellular location is the cell membrane. In terms of biological role, an essential GTPase that binds both GDP and GTP, with rapid nucleotide exchange. Plays a role in 16S rRNA processing and 30S ribosomal subunit biogenesis and possibly also in cell cycle regulation and energy metabolism. This is GTPase Era from Staphylococcus epidermidis (strain ATCC 12228 / FDA PCI 1200).